The chain runs to 216 residues: Adenylate kinase (216 aa).

10–15 (GAGKGT) is a binding site for ATP. The interval 30–59 (STGDIFRANIKEKTPLGIEAKRYIDNGQLV) is NMP. AMP is bound by residues Thr31, Arg36, 57 to 59 (QLV), 85 to 88 (GFPR), and Gln92. The segment at 126–163 (GRRVCTSCGASYHIRFNPPKIEGKCDICDNELIQRKDD) is LID. Residue Arg127 participates in ATP binding. Positions 130 and 133 each coordinate Zn(2+). Position 136-137 (136-137 (SY)) interacts with ATP. Positions 150 and 153 each coordinate Zn(2+). Residues Arg160 and Arg171 each contribute to the AMP site. ATP is bound at residue Glu199.

It belongs to the adenylate kinase family. As to quaternary structure, monomer.

The protein localises to the cytoplasm. The enzyme catalyses AMP + ATP = 2 ADP. It participates in purine metabolism; AMP biosynthesis via salvage pathway; AMP from ADP: step 1/1. In terms of biological role, catalyzes the reversible transfer of the terminal phosphate group between ATP and AMP. Plays an important role in cellular energy homeostasis and in adenine nucleotide metabolism. The polypeptide is Adenylate kinase (Clostridium botulinum (strain ATCC 19397 / Type A)).